The sequence spans 369 residues: Glutamate 5-kinase (369 aa).

Lys9 lines the ATP pocket. Residues Ser49, Asp136, and Asn148 each coordinate substrate. ATP contacts are provided by residues 168–169 (TD) and 210–216 (TGGMLTK). The PUA domain occupies 275–355 (QGSIWVDKGA…KGVLIYRDDW (81 aa)).

It belongs to the glutamate 5-kinase family.

Its subcellular location is the cytoplasm. It catalyses the reaction L-glutamate + ATP = L-glutamyl 5-phosphate + ADP. It functions in the pathway amino-acid biosynthesis; L-proline biosynthesis; L-glutamate 5-semialdehyde from L-glutamate: step 1/2. Catalyzes the transfer of a phosphate group to glutamate to form L-glutamate 5-phosphate. The chain is Glutamate 5-kinase from Streptococcus pneumoniae (strain ATCC 700669 / Spain 23F-1).